We begin with the raw amino-acid sequence, 412 residues long: MGDGAVKQGFLYLQQQQTFGKKWRRFGASLYGGSDCALARLELQEGPEKPRRCEAARKVIRLSDCLRVAEAGGEASSPRDTSAFFLETKERLYLLAAPAAERGDWVQAICLLAFPGQRKELSGPEGKQSRPCMEENELYSSAVTVGPHKEFAVTMRPTEASERCHLRGSYTLRAGESALELWGGPEPGTQLYDWPYRFLRRFGRDKVTFSFEAGRRCVSGEGNFEFETRQGNEIFLALEEAISAQKNAAPATPQPQPATIPASLPRPDSPYSRPHDSLPPPSPTTPVPAPRPRGQEGEYAVPFDAVARSLGKNFRGILAVPPQLLADPLYDSIEETLPPRPDHIYDEPEGVAALSLYDSPQEPRGEAWRRQATADRDPAGLQHVQPAGQDFSASGWQPGTEYDNVVLKKGPK.

Positions 4–114 (GAVKQGFLYL…WVQAICLLAF (111 aa)) constitute a PH domain. Positions 147 to 252 (PHKEFAVTMR…SAQKNAAPAT (106 aa)) constitute an IRS-type PTB domain. The interval 246–296 (KNAAPATPQPQPATIPASLPRPDSPYSRPHDSLPPPSPTTPVPAPRPRGQE) is disordered. The residue at position 271 (Tyr271) is a Phosphotyrosine. The span at 277-291 (SLPPPSPTTPVPAPR) shows a compositional bias: pro residues. Phosphotyrosine occurs at positions 299 and 345. Residues 359–412 (SPQEPRGEAWRRQATADRDPAGLQHVQPAGQDFSASGWQPGTEYDNVVLKKGPK) form a disordered region. Residues 361–378 (QEPRGEAWRRQATADRDP) show a composition bias toward basic and acidic residues.

It belongs to the DOK family. Type A subfamily. In terms of assembly, interacts with phosphorylated RASGAP and EGFR. Interacts with RET and NCK. Interacts (via PH domain) with TEK/TIE2 (tyrosine phosphorylated). As to quaternary structure, (Microbial infection) Interacts with Herpes simplex virus 1 (HHV-1) protein UL46; this interaction induces DOK2 phosphorylation and subsequent degradation. Post-translationally, on immunoreceptor stimulation, phosphorylated on C-terminal tyrosine residues. Phosphorylation on Tyr-345 is required for binding to the SH2 domain of NCK. Phosphorylation on both Tyr-271 and Tyr-299 is required for interaction with RASGAP. Phosphorylated on tyrosine residues by TEK/TIE2. Highly expressed in peripheral blood leukocytes, lymph nodes and spleen. Lower expression in thymus, bone marrow and fetal liver.

DOK proteins are enzymatically inert adaptor or scaffolding proteins. They provide a docking platform for the assembly of multimolecular signaling complexes. DOK2 may modulate the cellular proliferation induced by IL-4, as well as IL-2 and IL-3. May be involved in modulating Bcr-Abl signaling. Attenuates EGF-stimulated MAP kinase activation. The sequence is that of Docking protein 2 (DOK2) from Homo sapiens (Human).